Reading from the N-terminus, the 297-residue chain is MTNGQEPIAMLIAVSSADRLDLWQAIVLGFVQGATEFLPISSTAHLKVVPVVLGWGDPGVAFTAVIQLGSIVAVLSYFRQDLTYVLRGLVSAVRRQDFRSEPAQMGLGILFGTIPILIGGLLIKRFIPDYDNSPLRSLAAIAIVSIVMGLLLGIAEQLSKHQRDLSQLRLADGLWMGFAQALALIPGVSRSGSTLTAGLFQGLKRDTAARFSFLLGIPAITIAGLVELKDLLEAGIDGSSLGVLAIGTLSSLIFSWLAIAWLLRFLRTHNTWSFVVYRIIFGGVILTAIATGTLQNI.

Transmembrane regions (helical) follow at residues 58–78, 103–123, 138–158, 168–188, 208–228, 243–263, and 274–294; these read PGVA…LSYF, AQMG…GLLI, LAAI…AEQL, LRLA…IPGV, AARF…LVEL, VLAI…AWLL, and FVVY…TGTL.

This sequence belongs to the UppP family.

It localises to the cell inner membrane. It carries out the reaction di-trans,octa-cis-undecaprenyl diphosphate + H2O = di-trans,octa-cis-undecaprenyl phosphate + phosphate + H(+). Functionally, catalyzes the dephosphorylation of undecaprenyl diphosphate (UPP). Confers resistance to bacitracin. In Synechococcus sp. (strain ATCC 27144 / PCC 6301 / SAUG 1402/1) (Anacystis nidulans), this protein is Undecaprenyl-diphosphatase.